A 130-amino-acid polypeptide reads, in one-letter code: Lysozyme C (130 aa).

The C-type lysozyme domain occupies 2–130 (KVYGRCELAA…VNVWIRGCRL (129 aa)). 4 disulfide bridges follow: Cys7-Cys128, Cys31-Cys116, Cys65-Cys81, and Cys77-Cys95. Active-site residues include Glu36 and Asp53.

This sequence belongs to the glycosyl hydrolase 22 family. As to quaternary structure, monomer.

It localises to the secreted. The enzyme catalyses Hydrolysis of (1-&gt;4)-beta-linkages between N-acetylmuramic acid and N-acetyl-D-glucosamine residues in a peptidoglycan and between N-acetyl-D-glucosamine residues in chitodextrins.. In terms of biological role, lysozymes have primarily a bacteriolytic function; those in tissues and body fluids are associated with the monocyte-macrophage system and enhance the activity of immunoagents. In Phasianus versicolor (Green pheasant), this protein is Lysozyme C (LYZ).